Reading from the N-terminus, the 407-residue chain is Carbamoyl phosphate synthase small chain (407 aa).

A CPSase region spans residues 1 to 205 (MTETTPKTAP…LQDGYGEQDA (205 aa)). Residues S60, G257, and G259 each contribute to the L-glutamine site. The 189-residue stretch at 209–397 (HVVALDFGVK…INLIRERKGQ (189 aa)) folds into the Glutamine amidotransferase type-1 domain. The active-site Nucleophile is the C286. L-glutamine contacts are provided by L287, Q290, N328, G330, and F331. Catalysis depends on residues H370 and E372.

This sequence belongs to the CarA family. Composed of two chains; the small (or glutamine) chain promotes the hydrolysis of glutamine to ammonia, which is used by the large (or ammonia) chain to synthesize carbamoyl phosphate. Tetramer of heterodimers (alpha,beta)4.

It carries out the reaction hydrogencarbonate + L-glutamine + 2 ATP + H2O = carbamoyl phosphate + L-glutamate + 2 ADP + phosphate + 2 H(+). The catalysed reaction is L-glutamine + H2O = L-glutamate + NH4(+). It participates in amino-acid biosynthesis; L-arginine biosynthesis; carbamoyl phosphate from bicarbonate: step 1/1. Its pathway is pyrimidine metabolism; UMP biosynthesis via de novo pathway; (S)-dihydroorotate from bicarbonate: step 1/3. Small subunit of the glutamine-dependent carbamoyl phosphate synthetase (CPSase). CPSase catalyzes the formation of carbamoyl phosphate from the ammonia moiety of glutamine, carbonate, and phosphate donated by ATP, constituting the first step of 2 biosynthetic pathways, one leading to arginine and/or urea and the other to pyrimidine nucleotides. The small subunit (glutamine amidotransferase) binds and cleaves glutamine to supply the large subunit with the substrate ammonia. In Brucella suis (strain ATCC 23445 / NCTC 10510), this protein is Carbamoyl phosphate synthase small chain.